The chain runs to 274 residues: Thiamine kinase (274 aa).

This sequence belongs to the thiamine kinase family.

It carries out the reaction thiamine + ATP = thiamine phosphate + ADP + H(+). Its pathway is cofactor biosynthesis; thiamine diphosphate biosynthesis; thiamine phosphate from thiamine: step 1/1. Catalyzes the ATP-dependent phosphorylation of thiamine to thiamine phosphate. Is involved in thiamine salvage. The sequence is that of Thiamine kinase from Escherichia coli O157:H7 (strain EC4115 / EHEC).